The primary structure comprises 153 residues: Pheromone-binding protein Gp-9 (153 aa).

An N-terminal signal peptide occupies residues methionine 1–alanine 19. 3 disulfide bridges follow: cysteine 37-cysteine 77, cysteine 73-cysteine 129, and cysteine 118-cysteine 138.

The protein belongs to the PBP/GOBP family. In terms of assembly, homodimer.

It localises to the secreted. Its function is as follows. Colony queen number, a major feature of social organization, is associated with worker genotype for Gp-9. Colonies are headed by either a single reproductive queen (monogyne form) or multiple queens (polygyne form). Differences in worker Gp-9 genotypes between social forms may cause differences in workers' abilities to recognize queens and regulate their numbers. The sequence is that of Pheromone-binding protein Gp-9 from Solenopsis saevissima (Fire ant).